Reading from the N-terminus, the 206-residue chain is Ribosomal RNA small subunit methyltransferase G (206 aa).

S-adenosyl-L-methionine contacts are provided by residues glycine 74, leucine 79, 125–126 (VE), and arginine 140.

Belongs to the methyltransferase superfamily. RNA methyltransferase RsmG family.

The protein localises to the cytoplasm. It catalyses the reaction guanosine(527) in 16S rRNA + S-adenosyl-L-methionine = N(7)-methylguanosine(527) in 16S rRNA + S-adenosyl-L-homocysteine. In terms of biological role, specifically methylates the N7 position of guanine in position 527 of 16S rRNA. This chain is Ribosomal RNA small subunit methyltransferase G, found in Shewanella woodyi (strain ATCC 51908 / MS32).